A 1131-amino-acid chain; its full sequence is DNA polymerase II large subunit (1131 aa).

The protein belongs to the archaeal DNA polymerase II family. Heterodimer of a large subunit and a small subunit.

It catalyses the reaction DNA(n) + a 2'-deoxyribonucleoside 5'-triphosphate = DNA(n+1) + diphosphate. The enzyme catalyses Exonucleolytic cleavage in the 3'- to 5'-direction to yield nucleoside 5'-phosphates.. In terms of biological role, possesses two activities: a DNA synthesis (polymerase) and an exonucleolytic activity that degrades single-stranded DNA in the 3'- to 5'-direction. Has a template-primer preference which is characteristic of a replicative DNA polymerase. This is DNA polymerase II large subunit from Methanococcus vannielii (strain ATCC 35089 / DSM 1224 / JCM 13029 / OCM 148 / SB).